Reading from the N-terminus, the 83-residue chain is Mitotic-spindle organizing protein 1 (83 aa).

Belongs to the MOZART1 family. In terms of assembly, part of the gamma-tubulin complex.

The protein localises to the cytoplasm. It localises to the cytoskeleton. The protein resides in the microtubule organizing center. It is found in the spindle pole body. Required for gamma-tubulin complex recruitment to the microtubule organizing center (MTOC). This Botryotinia fuckeliana (strain B05.10) (Noble rot fungus) protein is Mitotic-spindle organizing protein 1.